The following is a 183-amino-acid chain: Probable chemoreceptor glutamine deamidase CheD (183 aa).

Belongs to the CheD family.

It carries out the reaction L-glutaminyl-[protein] + H2O = L-glutamyl-[protein] + NH4(+). Probably deamidates glutamine residues to glutamate on methyl-accepting chemotaxis receptors (MCPs), playing an important role in chemotaxis. This is Probable chemoreceptor glutamine deamidase CheD from Rhizobium meliloti (strain 1021) (Ensifer meliloti).